A 370-amino-acid polypeptide reads, in one-letter code: 2-aminoethylphosphonate--pyruvate transaminase (370 aa).

Position 194 is an N6-(pyridoxal phosphate)lysine (K194).

Belongs to the class-V pyridoxal-phosphate-dependent aminotransferase family. PhnW subfamily. In terms of assembly, homodimer. Pyridoxal 5'-phosphate is required as a cofactor.

It carries out the reaction (2-aminoethyl)phosphonate + pyruvate = phosphonoacetaldehyde + L-alanine. In terms of biological role, involved in phosphonate degradation. The sequence is that of 2-aminoethylphosphonate--pyruvate transaminase from Paraburkholderia phymatum (strain DSM 17167 / CIP 108236 / LMG 21445 / STM815) (Burkholderia phymatum).